We begin with the raw amino-acid sequence, 192 residues long: Lipid A acyltransferase PagP (192 aa).

A signal peptide spans 1-26 (MTVVNKSFLTFLVFFCQILFPLNASA). Residues His-64, Asp-107, and Ser-108 contribute to the active site.

This sequence belongs to the lipid A palmitoyltransferase family. Homodimer.

It localises to the cell outer membrane. It carries out the reaction a lipid A + a 1,2-diacyl-sn-glycero-3-phosphocholine = a hepta-acyl lipid A + a 2-acyl-sn-glycero-3-phosphocholine. The enzyme catalyses a lipid IVA + a 1,2-diacyl-sn-glycero-3-phosphocholine = a lipid IVB + a 2-acyl-sn-glycero-3-phosphocholine. The catalysed reaction is a lipid IIA + a 1,2-diacyl-sn-glycero-3-phosphocholine = a lipid IIB + a 2-acyl-sn-glycero-3-phosphocholine. In terms of biological role, transfers a fatty acid residue from the sn-1 position of a phospholipid to the N-linked hydroxyfatty acid chain on the proximal unit of lipid A or its precursors. The chain is Lipid A acyltransferase PagP from Cronobacter turicensis (strain DSM 18703 / CCUG 55852 / LMG 23827 / z3032).